Here is a 163-residue protein sequence, read N- to C-terminus: Inorganic pyrophosphatase (163 aa).

The substrate site is built by Lys21, Arg35, and Tyr47. Mg(2+) is bound by residues Asp57, Asp62, and Asp94. Tyr131 is a binding site for substrate.

The protein belongs to the PPase family. As to quaternary structure, homohexamer. Mg(2+) serves as cofactor.

The protein resides in the cytoplasm. It catalyses the reaction diphosphate + H2O = 2 phosphate + H(+). In terms of biological role, catalyzes the hydrolysis of inorganic pyrophosphate (PPi) forming two phosphate ions. This Halalkalibacterium halodurans (strain ATCC BAA-125 / DSM 18197 / FERM 7344 / JCM 9153 / C-125) (Bacillus halodurans) protein is Inorganic pyrophosphatase.